We begin with the raw amino-acid sequence, 396 residues long: Cell division protein DivIB (396 aa).

Disordered stretches follow at residues 1–23 (MSKD…SEWQ) and 37–116 (EVAL…ATKE). Over 1–130 (MSKDKKNEDK…AKIPGIHILR (130 aa)) the chain is Cytoplasmic. Composition is skewed to basic and acidic residues over residues 37–65 (EVAL…KQDQ) and 75–116 (ESAK…ATKE). Residues 131-151 (AFTILFPSLLLLIVSAYLLSP) traverse the membrane as a helical segment. Residues 152–396 (YATMKDIRVE…NQTNQRSSRR (245 aa)) are Extracellular-facing. The POTRA domain occupies 153-223 (ATMKDIRVEG…TKFTIKVKEY (71 aa)). Over residues 361–385 (KAKQEAKEAEKKQEEEQKKQEEESN) the composition is skewed to basic and acidic residues. The disordered stretch occupies residues 361 to 396 (KAKQEAKEAEKKQEEEQKKQEEESNRNQTNQRSSRR). The segment covering 386-396 (RNQTNQRSSRR) has biased composition (low complexity).

Belongs to the FtsQ/DivIB family. DivIB subfamily.

Its subcellular location is the cell membrane. Its function is as follows. Cell division protein that may be involved in stabilizing or promoting the assembly of the division complex. This Streptococcus pneumoniae (strain ATCC BAA-255 / R6) protein is Cell division protein DivIB.